A 102-amino-acid polypeptide reads, in one-letter code: Small ribosomal subunit protein eS24 (102 aa).

The segment at Val70–Glu102 is disordered. Over residues Glu79–Ala93 the composition is skewed to basic and acidic residues.

This sequence belongs to the eukaryotic ribosomal protein eS24 family.

The polypeptide is Small ribosomal subunit protein eS24 (Halobacterium salinarum (strain ATCC 29341 / DSM 671 / R1)).